The sequence spans 59 residues: Large ribosomal subunit protein bL32 (59 aa).

This sequence belongs to the bacterial ribosomal protein bL32 family.

This is Large ribosomal subunit protein bL32 from Thermodesulfovibrio yellowstonii (strain ATCC 51303 / DSM 11347 / YP87).